Consider the following 100-residue polypeptide: Aspartyl/glutamyl-tRNA(Asn/Gln) amidotransferase subunit C (100 aa).

It belongs to the GatC family. Heterotrimer of A, B and C subunits.

The catalysed reaction is L-glutamyl-tRNA(Gln) + L-glutamine + ATP + H2O = L-glutaminyl-tRNA(Gln) + L-glutamate + ADP + phosphate + H(+). It carries out the reaction L-aspartyl-tRNA(Asn) + L-glutamine + ATP + H2O = L-asparaginyl-tRNA(Asn) + L-glutamate + ADP + phosphate + 2 H(+). Functionally, allows the formation of correctly charged Asn-tRNA(Asn) or Gln-tRNA(Gln) through the transamidation of misacylated Asp-tRNA(Asn) or Glu-tRNA(Gln) in organisms which lack either or both of asparaginyl-tRNA or glutaminyl-tRNA synthetases. The reaction takes place in the presence of glutamine and ATP through an activated phospho-Asp-tRNA(Asn) or phospho-Glu-tRNA(Gln). In Rickettsia rickettsii (strain Sheila Smith), this protein is Aspartyl/glutamyl-tRNA(Asn/Gln) amidotransferase subunit C.